The primary structure comprises 445 residues: tRNA modification GTPase MnmE (445 aa).

The (6S)-5-formyl-5,6,7,8-tetrahydrofolate site is built by Arg20, Glu79, and Lys119. Positions 215 to 371 constitute a TrmE-type G domain; the sequence is GLKLAIIGPP…ILKNIEEIAE (157 aa). Residue Asn225 participates in K(+) binding. GTP contacts are provided by residues 225–230, 244–250, and 269–272; these read NAGKSS, SNIAGTT, and DTAG. Ser229 serves as a coordination point for Mg(2+). The K(+) site is built by Ser244, Ile246, and Thr249. A Mg(2+)-binding site is contributed by Thr250. Lys445 contributes to the (6S)-5-formyl-5,6,7,8-tetrahydrofolate binding site.

Belongs to the TRAFAC class TrmE-Era-EngA-EngB-Septin-like GTPase superfamily. TrmE GTPase family. Homodimer. Heterotetramer of two MnmE and two MnmG subunits. Requires K(+) as cofactor.

It localises to the cytoplasm. In terms of biological role, exhibits a very high intrinsic GTPase hydrolysis rate. Involved in the addition of a carboxymethylaminomethyl (cmnm) group at the wobble position (U34) of certain tRNAs, forming tRNA-cmnm(5)s(2)U34. The polypeptide is tRNA modification GTPase MnmE (Rickettsia bellii (strain OSU 85-389)).